A 145-amino-acid polypeptide reads, in one-letter code: uncharacterized protein (145 aa).

The segment at 37 to 123 (GKGTNTAKSS…MDREASYFAP (87 aa)) is disordered. The segment covering 38-63 (KGTNTAKSSGGNNGTNLNAKRSNTTQ) has biased composition (polar residues).

This is an uncharacterized protein from Caenorhabditis elegans.